Consider the following 1007-residue polypeptide: Lysosomal alpha-mannosidase (1007 aa).

Low complexity-rich tracts occupy residues 1–10 and 19–28; these read MGADARPLGV and AARPGTSSRA. The interval 1 to 30 is disordered; that stretch reads MGADARPLGVRAGGGGRGAARPGTSSRALP. Positions 1–50 are cleaved as a signal peptide; it reads MGADARPLGVRAGGGGRGAARPGTSSRALPPPLPPLSFLLLLLAAPGARA. 2 disulfide bridges follow: Cys-56/Cys-360 and Cys-269/Cys-274. The Zn(2+) site is built by His-73 and Asp-75. Asn-134 is a glycosylation site (N-linked (GlcNAc...) asparagine). Asp-197 contacts Zn(2+). Residue Asp-197 is the Nucleophile of the active site. N-linked (GlcNAc...) asparagine glycosylation is found at Asn-311, Asn-347, and Asn-369. Cystine bridges form between Cys-414-Cys-474 and Cys-495-Cys-503. His-448 provides a ligand contact to Zn(2+). N-linked (GlcNAc...) asparagine glycans are attached at residues Asn-499, Asn-543, Asn-643, Asn-649, Asn-690, Asn-764, and Asn-927.

This sequence belongs to the glycosyl hydrolase 38 family. Requires Zn(2+) as cofactor. Post-translationally, processed into 3 peptides of 72 kDa, 41 kDa and 12 kDa.

Its subcellular location is the lysosome. The enzyme catalyses Hydrolysis of terminal, non-reducing alpha-D-mannose residues in alpha-D-mannosides.. Its function is as follows. Necessary for the catabolism of N-linked carbohydrates released during glycoprotein turnover. This Felis catus (Cat) protein is Lysosomal alpha-mannosidase (MAN2B1).